The following is a 249-amino-acid chain: 3-deoxy-D-manno-octulosonic acid kinase (249 aa).

Asp-175 is an active-site residue.

Belongs to the protein kinase superfamily. KdkA/RfaP family.

It is found in the cell inner membrane. The enzyme catalyses an alpha-Kdo-(2-&gt;6)-lipid IVA + ATP = a 4-O-phospho-alpha-Kdo-(2-&gt;6)-lipid IVA + ADP + H(+). It functions in the pathway bacterial outer membrane biogenesis; LPS core biosynthesis. In terms of biological role, catalyzes the ATP-dependent phosphorylation of the 3-deoxy-D-manno-octulosonic acid (Kdo) residue in Kdo-lipid IV(A) at the 4-OH position. In Stenotrophomonas maltophilia (strain R551-3), this protein is 3-deoxy-D-manno-octulosonic acid kinase.